The following is a 539-amino-acid chain: DNA damage-binding protein CMR1 (539 aa).

Residues 22 to 89 (LNLPTEAKKE…ALKQEDLGGS (68 aa)) form a disordered region. Basic and acidic residues predominate over residues 27–39 (EAKKESVDPEVAP). WD repeat units lie at residues 182-223 (VTKE…EPLQ), 226-268 (LHHA…DVLD), 316-356 (LGEK…TART), 377-415 (NSRL…LDML), 462-505 (GRWV…LAHL), and 508-539 (ALMT…YWWE).

It belongs to the WD repeat DDB2/WDR76 family.

DNA-binding protein that binds to both single- and double-stranded DNA. Binds preferentially to UV-damaged DNA. May be involved in DNA-metabolic processes. The protein is DNA damage-binding protein CMR1 of Yarrowia lipolytica (strain CLIB 122 / E 150) (Yeast).